Reading from the N-terminus, the 74-residue chain is MYNIKKHYSISNLGFQKFFIRKPIIIYIDLLIVGINRLMLKLSSSPRLEIQYLHSFCCFETLSIHVNTNPGRRY.

This is an uncharacterized protein from Homo sapiens (Human).